The chain runs to 147 residues: Cyanate hydratase (147 aa).

Active-site residues include R88, E91, and S114.

Belongs to the cyanase family.

It catalyses the reaction cyanate + hydrogencarbonate + 3 H(+) = NH4(+) + 2 CO2. In terms of biological role, catalyzes the reaction of cyanate with bicarbonate to produce ammonia and carbon dioxide. This Thiobacillus denitrificans (strain ATCC 25259 / T1) protein is Cyanate hydratase.